Consider the following 229-residue polypeptide: 2-phytyl-1,4-naphtoquinone methyltransferase (229 aa).

Belongs to the class I-like SAM-binding methyltransferase superfamily. MenG/UbiE family.

It carries out the reaction demethylphylloquinol + S-adenosyl-L-methionine = phylloquinol + S-adenosyl-L-homocysteine + H(+). The protein operates within cofactor biosynthesis; phylloquinone biosynthesis. Methyltransferase required for the conversion of 2-phytyl-1,4-beta-naphthoquinol to phylloquinol. This Trichormus variabilis (strain ATCC 29413 / PCC 7937) (Anabaena variabilis) protein is 2-phytyl-1,4-naphtoquinone methyltransferase.